A 218-amino-acid polypeptide reads, in one-letter code: Large ribosomal subunit protein uL3 (218 aa).

Residues 124 to 162 are disordered; that stretch reads KRHGFSRGPMTHGSKNHREPGSTGAGTTPGRIYPGKRMA.

Belongs to the universal ribosomal protein uL3 family. Part of the 50S ribosomal subunit. Forms a cluster with proteins L14 and L19.

One of the primary rRNA binding proteins, it binds directly near the 3'-end of the 23S rRNA, where it nucleates assembly of the 50S subunit. The polypeptide is Large ribosomal subunit protein uL3 (Synechococcus sp. (strain CC9605)).